The primary structure comprises 224 residues: uncharacterized protein (224 aa).

This is an uncharacterized protein from Mycobacterium tuberculosis (strain ATCC 25618 / H37Rv).